Reading from the N-terminus, the 51-residue chain is Large ribosomal subunit protein eL39 (51 aa).

The protein belongs to the eukaryotic ribosomal protein eL39 family.

The sequence is that of Large ribosomal subunit protein eL39 from Hyperthermus butylicus (strain DSM 5456 / JCM 9403 / PLM1-5).